The sequence spans 967 residues: Dolichyl-phosphooligosaccharide-protein glycotransferase 1 (967 aa).

Residues 1-21 (MVKTQIKEKKKDEKVTIPLPG) lie on the Cytoplasmic side of the membrane. The helical transmembrane segment at 22-42 (KIKTVLAFLVVLAFAAYGFYI) threads the bilayer. Residues 43–112 (RHLTAGKYFS…ISIFGYNELE (70 aa)) lie on the Extracellular side of the membrane. The DXD motif 1 motif lies at 53–55 (DPD). Asp-55 contacts Mn(2+). A helical transmembrane segment spans residues 113–133 (AFLLWPPFVGFLSVIGVYLLG). The Cytoplasmic portion of the chain corresponds to 134 to 135 (RK). Residues 136–156 (VLNEWAGMWGAIILSVLTANF) form a helical membrane-spanning segment. Residues 157 to 165 (SRTFSGNAR) lie on the Extracellular side of the membrane. Mn(2+)-binding residues include Arg-165 and Asp-167. Positions 165–167 (RGD) match the DXD motif 2 motif. The helical transmembrane segment at 166-186 (GDGPFMMLFTFSAVLMLYYLT) threads the bilayer. Residues 187–193 (EENKNKK) are Cytoplasmic-facing. A helical transmembrane segment spans residues 194 to 214 (IIWGTLFVLLAGISTAAWNGS). Residue Pro-215 is a topological domain, extracellular. The helical transmembrane segment at 216–236 (FGLMVLLGFASFQTIILFIFG) threads the bilayer. Residues 237–247 (KINELREFIKE) lie on the Cytoplasmic side of the membrane. A helical transmembrane segment spans residues 248–268 (YYPAYLGILAISYLLTIPGIG). Position 269 (Lys-269) is a topological domain, extracellular. The helical transmembrane segment at 270 to 290 (IGGFVRFAFEVFLGLVFLAIV) threads the bilayer. Residues 291–306 (MLYGGKYLNYSDKKHR) lie on the Cytoplasmic side of the membrane. The helical transmembrane segment at 307-327 (FAVVAVIVIAGFAGAYIYVGP) threads the bilayer. Residues 328-360 (KLFTLMGGAYQSTQVYETVQELAKTDWGDVKVY) are Extracellular-facing. The short motif at 345–348 (TVQE) is the TIXE motif element. Residues 361-381 (YGVEKPNGIVFFLGLVGAMIV) form a helical membrane-spanning segment. Residues 382–396 (TARYLYKLFKDGRRP) are Cytoplasmic-facing. A helical transmembrane segment spans residues 397–417 (HEELFAITFYVMSIYLLWTAA). A topological domain (extracellular) is located at residue Arg-418. Arg-418 is an a glycophospholipid binding site. A helical membrane pass occupies residues 419-439 (FLFLASYAIALMSGVFAGYVL). The Cytoplasmic portion of the chain corresponds to 440-453 (ETVEKMKESIPIKA). Residues 454 to 474 (ALGGVIAIMLLLIPLTHGPLL) form a helical membrane-spanning segment. At 475–967 (AQSAKSMRTT…LEVSASAPHH (493 aa)) the chain is on the extracellular side. Positions 511–513 (WWD) are interacts with target acceptor peptide in protein substrate. Residues 511 to 515 (WWDYG) carry the WWDYG motif motif. A glycophospholipid is bound at residue Tyr-516. The short motif at 571 to 578 (DWAKFNAI) is the DK motif element.

This sequence belongs to the STT3 family. The cofactor is Mn(2+). Mg(2+) is required as a cofactor.

Its subcellular location is the cell membrane. The catalysed reaction is an archaeal dolichyl phosphooligosaccharide + [protein]-L-asparagine = an archaeal dolichyl phosphate + a glycoprotein with the oligosaccharide chain attached by N-beta-D-glycosyl linkage to a protein L-asparagine.. It participates in protein modification; protein glycosylation. Functionally, oligosaccharyl transferase (OST) that catalyzes the initial transfer of a defined glycan (ManNAcXyl(2)GlcAMan(2)GalNAc in P.furiosus) from the lipid carrier dolichol-monophosphate to an asparagine residue within an Asn-X-Ser/Thr consensus motif in nascent polypeptide chains, the first step in protein N-glycosylation. The polypeptide is Dolichyl-phosphooligosaccharide-protein glycotransferase 1 (aglB1) (Pyrococcus furiosus (strain ATCC 43587 / DSM 3638 / JCM 8422 / Vc1)).